Reading from the N-terminus, the 114-residue chain is T cell receptor beta variable 6-4 (114 aa).

The first 21 residues, 1–21 (MSIRLLCCVAFSLLWAGPVTA), serve as a signal peptide directing secretion. Residues 22-114 (GITQAPTSQI…TSVYFCASSD (93 aa)) enclose the Ig-like domain. The cysteines at positions 42 and 110 are disulfide-linked.

Alpha-beta TR is a heterodimer composed of an alpha and beta chain; disulfide-linked. The alpha-beta TR is associated with the transmembrane signaling CD3 coreceptor proteins to form the TR-CD3 (TcR or TCR). The assembly of alpha-beta TR heterodimers with CD3 occurs in the endoplasmic reticulum where a single alpha-beta TR heterodimer associates with one CD3D-CD3E heterodimer, one CD3G-CD3E heterodimer and one CD247 homodimer forming a stable octameric structure. CD3D-CD3E and CD3G-CD3E heterodimers preferentially associate with TR alpha and TR beta chains, respectively. The association of the CD247 homodimer is the last step of TcR assembly in the endoplasmic reticulum and is required for transport to the cell surface.

The protein resides in the cell membrane. Its function is as follows. V region of the variable domain of T cell receptor (TR) beta chain that participates in the antigen recognition. Alpha-beta T cell receptors are antigen specific receptors which are essential to the immune response and are present on the cell surface of T lymphocytes. Recognize peptide-major histocompatibility (MH) (pMH) complexes that are displayed by antigen presenting cells (APC), a prerequisite for efficient T cell adaptive immunity against pathogens. Binding of alpha-beta TR to pMH complex initiates TR-CD3 clustering on the cell surface and intracellular activation of LCK that phosphorylates the ITAM motifs of CD3G, CD3D, CD3E and CD247 enabling the recruitment of ZAP70. In turn ZAP70 phosphorylates LAT, which recruits numerous signaling molecules to form the LAT signalosome. The LAT signalosome propagates signal branching to three major signaling pathways, the calcium, the mitogen-activated protein kinase (MAPK) kinase and the nuclear factor NF-kappa-B (NF-kB) pathways, leading to the mobilization of transcription factors that are critical for gene expression and essential for T cell growth and differentiation. The T cell repertoire is generated in the thymus, by V-(D)-J rearrangement. This repertoire is then shaped by intrathymic selection events to generate a peripheral T cell pool of self-MH restricted, non-autoaggressive T cells. Post-thymic interaction of alpha-beta TR with the pMH complexes shapes TR structural and functional avidity. The chain is T cell receptor beta variable 6-4 from Homo sapiens (Human).